Here is a 208-residue protein sequence, read N- to C-terminus: Outer-membrane lipoprotein carrier protein (208 aa).

The first 25 residues, M1–A25, serve as a signal peptide directing secretion.

Belongs to the LolA family. Monomer.

It localises to the periplasm. Participates in the translocation of lipoproteins from the inner membrane to the outer membrane. Only forms a complex with a lipoprotein if the residue after the N-terminal Cys is not an aspartate (The Asp acts as a targeting signal to indicate that the lipoprotein should stay in the inner membrane). This chain is Outer-membrane lipoprotein carrier protein, found in Vibrio campbellii (strain ATCC BAA-1116).